The following is a 732-amino-acid chain: 1,4-alpha-glucan branching enzyme GlgB (732 aa).

D415 acts as the Nucleophile in catalysis. The Proton donor role is filled by E468.

It belongs to the glycosyl hydrolase 13 family. GlgB subfamily. In terms of assembly, monomer.

The enzyme catalyses Transfers a segment of a (1-&gt;4)-alpha-D-glucan chain to a primary hydroxy group in a similar glucan chain.. Its pathway is glycan biosynthesis; glycogen biosynthesis. Its function is as follows. Catalyzes the formation of the alpha-1,6-glucosidic linkages in glycogen by scission of a 1,4-alpha-linked oligosaccharide from growing alpha-1,4-glucan chains and the subsequent attachment of the oligosaccharide to the alpha-1,6 position. The chain is 1,4-alpha-glucan branching enzyme GlgB from Nitrosomonas eutropha (strain DSM 101675 / C91 / Nm57).